A 236-amino-acid chain; its full sequence is Small ribosomal subunit protein uS2c (236 aa).

It belongs to the universal ribosomal protein uS2 family.

It localises to the plastid. This chain is Small ribosomal subunit protein uS2c (rps2), found in Cuscuta gronovii (Common dodder).